The sequence spans 401 residues: Divinyl chlorophyllide a 8-vinyl-reductase, chloroplastic (401 aa).

Over residues 1-10 (MATILLSSRL) the composition is skewed to polar residues. Residues 1–26 (MATILLSSRLPTTGTATPSPTRPAPR) are disordered. A chloroplast-targeting transit peptide spans 1-54 (MATILLSSRLPTTGTATPSPTRPAPRFLSFPGTAIRRRGRGPLLASSAVSPPAP).

It localises to the plastid. The protein resides in the chloroplast. The catalysed reaction is protochlorophyllide a + NADP(+) = 3,8-divinyl protochlorophyllide a + NADPH + H(+). It participates in porphyrin-containing compound metabolism; chlorophyll biosynthesis. Its function is as follows. Catalyzes the conversion of divinyl chlorophyllide to monovinyl chlorophyllide. Reduces the 8-vinyl group of the tetrapyrrole to an ethyl group using NADPH as the reductant. Can use (3,8-divinyl)-chlorophyllide a (DV-Chlidea) &gt; (3,8-divinyl)-chlorophyll a (DV-Chla) &gt; (3,8-divinyl)-protochlorophyllide a (DV-Pchlidea) &gt; (3,8-divinyl)-magnesium-protoporphyrin IX monomethyl ester (DV-MPE) &gt; (3,8-divinyl)-magnesium-protoporphyrin IX (DV-Mg-Proto) as substrates. The polypeptide is Divinyl chlorophyllide a 8-vinyl-reductase, chloroplastic (DVR) (Zea mays (Maize)).